The following is a 165-amino-acid chain: Large ribosomal subunit protein uL10 (165 aa).

This sequence belongs to the universal ribosomal protein uL10 family. In terms of assembly, part of the ribosomal stalk of the 50S ribosomal subunit. The N-terminus interacts with L11 and the large rRNA to form the base of the stalk. The C-terminus forms an elongated spine to which L12 dimers bind in a sequential fashion forming a multimeric L10(L12)X complex.

Functionally, forms part of the ribosomal stalk, playing a central role in the interaction of the ribosome with GTP-bound translation factors. The chain is Large ribosomal subunit protein uL10 from Cronobacter sakazakii (strain ATCC BAA-894) (Enterobacter sakazakii).